The following is a 41-amino-acid chain: Large ribosomal subunit protein bL36 (41 aa).

Belongs to the bacterial ribosomal protein bL36 family.

This is Large ribosomal subunit protein bL36 from Nitrobacter hamburgensis (strain DSM 10229 / NCIMB 13809 / X14).